Reading from the N-terminus, the 501-residue chain is Cytochrome P450 4c21 (501 aa).

Residues E309 and C447 each coordinate heme.

Belongs to the cytochrome P450 family. Heme serves as cofactor.

The protein localises to the endoplasmic reticulum membrane. It localises to the microsome membrane. The enzyme catalyses an organic molecule + reduced [NADPH--hemoprotein reductase] + O2 = an alcohol + oxidized [NADPH--hemoprotein reductase] + H2O + H(+). This chain is Cytochrome P450 4c21 (CYP4C21), found in Blattella germanica (German cockroach).